A 259-amino-acid polypeptide reads, in one-letter code: Probable dihydroorotate dehydrogenase B (NAD(+)), electron transfer subunit (259 aa).

The region spanning 1-89 (MLPLNATIVQ…RGPFGKGFSL (89 aa)) is the FAD-binding FR-type domain. Residues Cys-211, Cys-216, Cys-219, and Cys-229 each contribute to the [2Fe-2S] cluster site.

It belongs to the PyrK family. Heterotetramer of 2 PyrK and 2 PyrD type B subunits. [2Fe-2S] cluster is required as a cofactor. It depends on FAD as a cofactor.

It functions in the pathway pyrimidine metabolism; UMP biosynthesis via de novo pathway; orotate from (S)-dihydroorotate (NAD(+) route): step 1/1. Responsible for channeling the electrons from the oxidation of dihydroorotate from the FMN redox center in the PyrD type B subunit to the ultimate electron acceptor NAD(+). This Methanosarcina barkeri (strain Fusaro / DSM 804) protein is Probable dihydroorotate dehydrogenase B (NAD(+)), electron transfer subunit.